We begin with the raw amino-acid sequence, 599 residues long: Protein ECM25 (599 aa).

Residues 181-359 (NRLTPLAIRQ…NLLDFFPEIA (179 aa)) form the Rho-GAP domain. 3 disordered regions span residues 362 to 447 (ISSP…PLPI), 468 to 495 (ASSS…SSTD), and 543 to 563 (ELQE…KFSQ). 3 stretches are compositionally biased toward low complexity: residues 363-373 (SSPPSSVSSSS), 396-413 (TLPR…TSPT), and 468-483 (ASSS…KTPS). Positions 543 to 562 (ELQEKKKKNETTSKTADKFS) are enriched in basic and acidic residues.

Its subcellular location is the cytoplasm. Functionally, may be involved in cell wall organization and biogenesis. The chain is Protein ECM25 (ECM25) from Saccharomyces cerevisiae (strain ATCC 204508 / S288c) (Baker's yeast).